A 370-amino-acid polypeptide reads, in one-letter code: Aminomethyltransferase (370 aa).

It belongs to the GcvT family. The glycine cleavage system is composed of four proteins: P, T, L and H.

The enzyme catalyses N(6)-[(R)-S(8)-aminomethyldihydrolipoyl]-L-lysyl-[protein] + (6S)-5,6,7,8-tetrahydrofolate = N(6)-[(R)-dihydrolipoyl]-L-lysyl-[protein] + (6R)-5,10-methylene-5,6,7,8-tetrahydrofolate + NH4(+). Its function is as follows. The glycine cleavage system catalyzes the degradation of glycine. The protein is Aminomethyltransferase of Stenotrophomonas maltophilia (strain K279a).